The primary structure comprises 318 residues: uncharacterized protein (318 aa).

This is an uncharacterized protein from Orgyia pseudotsugata multicapsid polyhedrosis virus (OpMNPV).